The primary structure comprises 27 residues: U18-ctenitoxin-Co1a (27 aa).

This sequence belongs to the u18-CNTX family. In terms of tissue distribution, expressed by the venom gland.

The protein localises to the secreted. Its function is as follows. Not toxic to mice by intracerebroventricular injection. This chain is U18-ctenitoxin-Co1a, found in Ctenus ornatus (Brazilian spider).